Reading from the N-terminus, the 250-residue chain is Triosephosphate isomerase (250 aa).

8–10 (NWK) provides a ligand contact to substrate. The active-site Electrophile is His96. The active-site Proton acceptor is the Glu169. Residues Gly175, Ser214, and 235 to 236 (GG) each bind substrate.

It belongs to the triosephosphate isomerase family. Homodimer.

The protein resides in the cytoplasm. It carries out the reaction D-glyceraldehyde 3-phosphate = dihydroxyacetone phosphate. The protein operates within carbohydrate biosynthesis; gluconeogenesis. It functions in the pathway carbohydrate degradation; glycolysis; D-glyceraldehyde 3-phosphate from glycerone phosphate: step 1/1. Its function is as follows. Involved in the gluconeogenesis. Catalyzes stereospecifically the conversion of dihydroxyacetone phosphate (DHAP) to D-glyceraldehyde-3-phosphate (G3P). This is Triosephosphate isomerase from Oleidesulfovibrio alaskensis (strain ATCC BAA-1058 / DSM 17464 / G20) (Desulfovibrio alaskensis).